Here is a 427-residue protein sequence, read N- to C-terminus: UDP-N-acetyl-D-mannosamine dehydrogenase (427 aa).

The NAD(+) site is built by Tyr-20, Ile-21, Asp-40, Arg-45, Thr-92, and Thr-130. Positions 157, 158, 209, 213, 216, 247, 249, and 260 each coordinate UDP-N-acetyl-alpha-D-mannosaminouronate. Lys-209 serves as the catalytic Proton donor/acceptor. Catalysis depends on Cys-263, which acts as the Nucleophile. Tyr-317 and Lys-318 together coordinate UDP-N-acetyl-alpha-D-mannosaminouronate. Arg-325 is a binding site for NAD(+). Lys-403 is a binding site for UDP-N-acetyl-alpha-D-mannosaminouronate.

It belongs to the UDP-glucose/GDP-mannose dehydrogenase family. Homotetramer; probably dimer of dimers.

It carries out the reaction UDP-N-acetyl-alpha-D-mannosamine + 2 NAD(+) + H2O = UDP-N-acetyl-alpha-D-mannosaminouronate + 2 NADH + 3 H(+). In terms of biological role, catalyzes the four-electron oxidation of UDP-N-acetyl-D-mannosamine (UDP-ManNAc), reducing NAD(+) and releasing UDP-N-acetylmannosaminuronic acid (UDP-ManNAcA). This Methanocaldococcus jannaschii (strain ATCC 43067 / DSM 2661 / JAL-1 / JCM 10045 / NBRC 100440) (Methanococcus jannaschii) protein is UDP-N-acetyl-D-mannosamine dehydrogenase (wecC).